Consider the following 237-residue polypeptide: ATP synthase subunit a (237 aa).

Helical transmembrane passes span 17-37, 78-98, 178-198, and 201-221; these read LSDM…AVAA, LGVT…PFWL, ILLG…CGSI, and MVIM…AFIF.

It belongs to the ATPase A chain family. As to quaternary structure, F-type ATPases have 2 components, CF(1) - the catalytic core - and CF(0) - the membrane proton channel. CF(1) has five subunits: alpha(3), beta(3), gamma(1), delta(1), epsilon(1). CF(0) has three main subunits: a(1), b(2) and c(9-12). The alpha and beta chains form an alternating ring which encloses part of the gamma chain. CF(1) is attached to CF(0) by a central stalk formed by the gamma and epsilon chains, while a peripheral stalk is formed by the delta and b chains.

Its subcellular location is the cell membrane. In terms of biological role, key component of the proton channel; it plays a direct role in the translocation of protons across the membrane. The polypeptide is ATP synthase subunit a (Bacillus caldotenax).